A 781-amino-acid polypeptide reads, in one-letter code: Pyrin (781 aa).

One can recognise a Pyrin domain in the interval M1 to Q92. Residues E93–G111 show a composition bias toward polar residues. The disordered stretch occupies residues E93–C226. A compositionally biased stretch (basic and acidic residues) spans N113–G126. Positions L153–E163 are enriched in basic residues. S242 carries the phosphoserine modification. Residues K266–R280 are interaction with RELA. Disordered regions lie at residues N270–P322 and E336–P373. Residues Q370–I412 form a B box-type zinc finger. The stretch at E413–S442 forms a coiled coil. A Nuclear localization signal motif is present at residues K420 to G437. Residues K420–M582 are required for homotrimerization and induction of pyroptosomes. The B30.2/SPRY domain occupies S580–V775.

In terms of assembly, homotrimer. Interacts (via the B box-type zinc finger) with PSTPIP1. Interacts (via the B30.2/SPRY domain) with several components of the inflammasome complex, including CASP1 p20 and p10 subunits, CASP5, PYCARD, NLRP1, NLRP2 and NLRP3, as well as with unprocessed IL1B; this interaction may lead to autophagic degradation of these proteins. Component of the AIM2 PANoptosome complex, a multiprotein complex that drives inflammatory cell death (PANoptosis). Interacts with NFKBIA and RELA. Interacts weakly with VASP and ACTR3. Interacts with active ULK1 (phosphorylated on 'Ser-317') and BECN1 simultaneously. Also interacts with ATG16L1 (via WD repeats), and with ATG8 family members, including GABARAP, GABARAPL1 and, to a lesser extent, GABARAPL2, MAP1LC3A/LC3A and MAP1LC3C/LC3C. Interacts with TRIM21. Interacts with YWHAB, YWHAE, YWHAG, YWHAH, YWHAQ and YWHAZ; the interaction is required for the down-regulation of pyrin pro-inflammatory activity. Post-translationally, cleaved by CASP1. The N-terminal cleavage product localizes to the nucleus as a filamentous network and to the cytoplasm, interacts more strongly with RELA and NFKBIA than the full-length protein, enhances the nuclear localization of RELA and induces NFKBIA proteolysis. The C-terminal cleavage product localizes to the cytoplasm. Phosphorylation at Ser-242 is required for the interaction with 14-3-3 proteins and down-regulation of pyrin pro-inflammatory activity. In terms of processing, degraded along with the delivery of its substrates to autolysosomal compartments (at protein level). In terms of tissue distribution, expressed in peripheral blood leukocytes, particularly in mature granulocytes and to a lesser extent in monocytes but not in lymphocytes. Detected in spleen, lung and muscle, probably as a result of leukocyte infiltration in these tissues. Not expressed in thymus, prostate, testis, ovary, small intestine, colon, heart, brain, placenta, liver, kidney, pancreas. Expression detected in several myeloid leukemic, colon cancer, and prostate cancer cell lines.

It is found in the cytoplasm. It localises to the cytoskeleton. The protein localises to the cell projection. Its subcellular location is the ruffle. The protein resides in the lamellipodium. It is found in the nucleus. It localises to the cytoplasmic vesicle. The protein localises to the autophagosome. Functionally, involved in the regulation of innate immunity and the inflammatory response in response to IFNG/IFN-gamma. Organizes autophagic machinery by serving as a platform for the assembly of ULK1, Beclin 1/BECN1, ATG16L1, and ATG8 family members and recognizes specific autophagy targets, thus coordinating target recognition with assembly of the autophagic apparatus and initiation of autophagy. Acts as an autophagy receptor for the degradation of several inflammasome components, including CASP1, NLRP1 and NLRP3, hence preventing excessive IL1B- and IL18-mediated inflammation. However, it can also have a positive effect in the inflammatory pathway, acting as an innate immune sensor that triggers PYCARD/ASC specks formation, caspase-1 activation, and IL1B and IL18 production. Together with AIM2, also acts as a mediator of pyroptosis, necroptosis and apoptosis (PANoptosis), an integral part of host defense against pathogens, in response to bacterial infection. It is required for PSTPIP1-induced PYCARD/ASC oligomerization and inflammasome formation. Recruits PSTPIP1 to inflammasomes, and is required for PSTPIP1 oligomerization. The sequence is that of Pyrin from Homo sapiens (Human).